A 405-amino-acid chain; its full sequence is Scarecrow-like protein 23 (405 aa).

Residues methionine 1–lysine 20 form a disordered region. The GRAS domain occupies glutamate 31 to lysine 400. A leucine repeat I (LRI) region spans residues isoleucine 38–serine 102. A LxCxE motif motif is present at residues leucine 45–glutamate 49. A VHIID region spans residues leucine 121–glycine 186. Residues valine 152–aspartate 156 carry the VHIID motif. Residues serine 196–serine 228 are leucine repeat II (LRII). Residues valine 238–asparagine 327 are PFYRE. Residues alanine 330–lysine 400 form an SAW region.

This sequence belongs to the GRAS family. Interacts with SHR. As to expression, expressed in seedlings, cotyledons, shoot apex, leaves and flowers.

Its subcellular location is the nucleus. Functionally, probable transcription factor involved in plant development. This chain is Scarecrow-like protein 23 (SCL23), found in Arabidopsis thaliana (Mouse-ear cress).